We begin with the raw amino-acid sequence, 141 residues long: 3-hydroxyacyl-[acyl-carrier-protein] dehydratase FabZ (141 aa).

H48 is an active-site residue.

It belongs to the thioester dehydratase family. FabZ subfamily.

It is found in the cytoplasm. The enzyme catalyses a (3R)-hydroxyacyl-[ACP] = a (2E)-enoyl-[ACP] + H2O. Functionally, involved in unsaturated fatty acids biosynthesis. Catalyzes the dehydration of short chain beta-hydroxyacyl-ACPs and long chain saturated and unsaturated beta-hydroxyacyl-ACPs. This is 3-hydroxyacyl-[acyl-carrier-protein] dehydratase FabZ from Streptococcus thermophilus (strain CNRZ 1066).